Reading from the N-terminus, the 402-residue chain is Putative RNA-guided DNA endonuclease (402 aa).

Residue aspartate 188 is part of the active site. Positions 202 to 239 (KITNPKHERRDRARLAKAQRDVSRKAKGSANRKKARRK) are disordered. The segment covering 204 to 225 (TNPKHERRDRARLAKAQRDVSR) has biased composition (basic and acidic residues). Positions 226–239 (KAKGSANRKKARRK) are enriched in basic residues. Glutamate 272 is an active-site residue. 4 residues coordinate Zn(2+): cysteine 325, cysteine 328, cysteine 344, and cysteine 346. The active site involves aspartate 353. Residues 373 to 402 (GIRPQRESSRTGRSSVKQEPQRATAGIPRL) are disordered.

The protein in the N-terminal section; belongs to the transposase 2 family. This sequence in the C-terminal section; belongs to the transposase 35 family.

An RNA-guided dsDNA endonuclease. When guided by an RNA derived from the right-end element of its insertion sequence element (IS), cleaves DNA downstream of the transposon-associated motif (TAM). Cleaves supercoiled and linear DNA in a staggered manner 15-21 bases from the TAM yielding 5'-overhangs. Binds reRNA, an approximately 150 nucleotide base sRNA derived from the 3' end of its own gene, the right end (RE) of the insertion sequence (IS) plus sequence downstream of the IS. The sequence is that of Putative RNA-guided DNA endonuclease from Streptomyces pristinaespiralis.